The chain runs to 307 residues: Auxin-induced protein PCNT115 (307 aa).

Residue Tyr64 is the Proton donor of the active site. Substrate is bound at residue His136. 215 to 225 (SPLGRGFLSSG) is an NADP(+) binding site.

The protein belongs to the aldo/keto reductase family. Aldo/keto reductase 2 subfamily.

The polypeptide is Auxin-induced protein PCNT115 (Nicotiana tabacum (Common tobacco)).